We begin with the raw amino-acid sequence, 375 residues long: Glutamate 5-kinase (375 aa).

K17 is an ATP binding site. Positions 57, 144, and 156 each coordinate substrate. 176–177 (TD) is a binding site for ATP. Residues 283–361 (KGRLWLDTGA…HQIEQILGYV (79 aa)) form the PUA domain.

Belongs to the glutamate 5-kinase family.

The protein localises to the cytoplasm. The catalysed reaction is L-glutamate + ATP = L-glutamyl 5-phosphate + ADP. Its pathway is amino-acid biosynthesis; L-proline biosynthesis; L-glutamate 5-semialdehyde from L-glutamate: step 1/2. Functionally, catalyzes the transfer of a phosphate group to glutamate to form L-glutamate 5-phosphate. The chain is Glutamate 5-kinase from Nitrosococcus oceani (strain ATCC 19707 / BCRC 17464 / JCM 30415 / NCIMB 11848 / C-107).